The following is a 283-amino-acid chain: Reaction center protein L chain (283 aa).

3 helical membrane passes run glycine 33 to glutamine 56, glycine 85 to glycine 113, and tyrosine 116 to glycine 141. Histidine 154 and histidine 174 together coordinate (7R,8Z)-bacteriochlorophyll b. The helical transmembrane segment at asparagine 171–asparagine 200 threads the bilayer. Fe cation is bound at residue histidine 191. Phenylalanine 217 provides a ligand contact to a ubiquinone. A helical membrane pass occupies residues glycine 226–serine 252. Histidine 231 contacts Fe cation.

This sequence belongs to the reaction center PufL/M/PsbA/D family. In terms of assembly, reaction center is composed of four bacteriochlorophylls, two bacteriopheophytins, two ubiquinones, one iron, and three highly hydrophobic polypeptide chains (designated L, M, and H).

Its subcellular location is the cellular chromatophore membrane. In terms of biological role, the reaction center is a membrane-bound complex that mediates the initial photochemical event in the electron transfer process of photosynthesis. This Roseobacter denitrificans (strain ATCC 33942 / OCh 114) (Erythrobacter sp. (strain OCh 114)) protein is Reaction center protein L chain (pufL).